The primary structure comprises 285 residues: Ribosomal protein L11 methyltransferase (285 aa).

Positions 131, 154, 176, and 223 each coordinate S-adenosyl-L-methionine.

The protein belongs to the methyltransferase superfamily. PrmA family.

The protein localises to the cytoplasm. The enzyme catalyses L-lysyl-[protein] + 3 S-adenosyl-L-methionine = N(6),N(6),N(6)-trimethyl-L-lysyl-[protein] + 3 S-adenosyl-L-homocysteine + 3 H(+). Methylates ribosomal protein L11. The polypeptide is Ribosomal protein L11 methyltransferase (Brucella abortus (strain S19)).